We begin with the raw amino-acid sequence, 248 residues long: PF03932 family protein CutC (248 aa).

This sequence belongs to the CutC family. In terms of assembly, homodimer.

Its subcellular location is the cytoplasm. The protein is PF03932 family protein CutC of Escherichia coli (strain 55989 / EAEC).